Here is a 330-residue protein sequence, read N- to C-terminus: Clavaminate synthase-like protein At3g21360 (330 aa).

A2 is modified (N-acetylalanine). Fe cation is bound by residues H120, E122, and H313.

Requires Fe cation as cofactor.

This chain is Clavaminate synthase-like protein At3g21360, found in Arabidopsis thaliana (Mouse-ear cress).